The chain runs to 360 residues: Phospho-N-acetylmuramoyl-pentapeptide-transferase (360 aa).

A run of 10 helical transmembrane segments spans residues 26-46 (AILG…KMIA), 73-93 (TMGG…WGDL), 97-117 (YVWV…IDDY), 132-152 (WKYL…YASA), 168-188 (VMPQ…VGSS), 199-219 (GLAI…AYLS), 236-256 (AGEL…FLWF), 263-283 (VFMG…IAVL), 288-308 (ILLV…ILQV), and 338-358 (VIVR…ATLK).

The protein belongs to the glycosyltransferase 4 family. MraY subfamily. The cofactor is Mg(2+).

Its subcellular location is the cell inner membrane. It catalyses the reaction UDP-N-acetyl-alpha-D-muramoyl-L-alanyl-gamma-D-glutamyl-meso-2,6-diaminopimeloyl-D-alanyl-D-alanine + di-trans,octa-cis-undecaprenyl phosphate = di-trans,octa-cis-undecaprenyl diphospho-N-acetyl-alpha-D-muramoyl-L-alanyl-D-glutamyl-meso-2,6-diaminopimeloyl-D-alanyl-D-alanine + UMP. The protein operates within cell wall biogenesis; peptidoglycan biosynthesis. Functionally, catalyzes the initial step of the lipid cycle reactions in the biosynthesis of the cell wall peptidoglycan: transfers peptidoglycan precursor phospho-MurNAc-pentapeptide from UDP-MurNAc-pentapeptide onto the lipid carrier undecaprenyl phosphate, yielding undecaprenyl-pyrophosphoryl-MurNAc-pentapeptide, known as lipid I. The protein is Phospho-N-acetylmuramoyl-pentapeptide-transferase of Shewanella halifaxensis (strain HAW-EB4).